We begin with the raw amino-acid sequence, 156 residues long: ATP synthase subunit b (156 aa).

Residues 7–29 (LLGQAISFALFVWFCIKFVWPPL) traverse the membrane as a helical segment.

It belongs to the ATPase B chain family. As to quaternary structure, F-type ATPases have 2 components, F(1) - the catalytic core - and F(0) - the membrane proton channel. F(1) has five subunits: alpha(3), beta(3), gamma(1), delta(1), epsilon(1). F(0) has three main subunits: a(1), b(2) and c(10-14). The alpha and beta chains form an alternating ring which encloses part of the gamma chain. F(1) is attached to F(0) by a central stalk formed by the gamma and epsilon chains, while a peripheral stalk is formed by the delta and b chains.

The protein resides in the cell inner membrane. Functionally, f(1)F(0) ATP synthase produces ATP from ADP in the presence of a proton or sodium gradient. F-type ATPases consist of two structural domains, F(1) containing the extramembraneous catalytic core and F(0) containing the membrane proton channel, linked together by a central stalk and a peripheral stalk. During catalysis, ATP synthesis in the catalytic domain of F(1) is coupled via a rotary mechanism of the central stalk subunits to proton translocation. Its function is as follows. Component of the F(0) channel, it forms part of the peripheral stalk, linking F(1) to F(0). The chain is ATP synthase subunit b from Shewanella sp. (strain W3-18-1).